The sequence spans 296 residues: Thioredoxin-related transmembrane protein 2 (296 aa).

Residues 1–48 (MAVLAPLIALVYSVPRLSRWLAQPYYLLSALLSAAFLLVRKLPPLCHG) form the signal peptide. Topologically, residues 49-102 (LPTQREDGNPCDFDWREVEILMFLSAIVMMKNRRSITVEQHIGNIFMFSKVANA) are extracellular. The chain crosses the membrane as a helical span at residues 103–125 (ILFFRLDIRMGLLYITLCIVFLM). The 156-residue stretch at 114 to 269 (LLYITLCIVF…LYQRAKKLSK (156 aa)) folds into the Thioredoxin domain. The Cytoplasmic portion of the chain corresponds to 126-296 (TCKPPLYMGP…VSDGESKKDK (171 aa)). Ser-211, Ser-243, and Ser-288 each carry phosphoserine. Residues 269 to 296 (KAGDNIPEEQPVAPTPTRVSDGESKKDK) are disordered. Residues 293 to 296 (KKDK) carry the Di-lysine motif motif.

Monomer. Homodimer; disulfide-linked. Occurs in both reduced and oxidized monomeric form. Oxidative conditions increase homodimerization. Interacts with CANX. Interacts with ATP2A2.

Its subcellular location is the endoplasmic reticulum membrane. It localises to the mitochondrion membrane. In terms of biological role, endoplasmic reticulum and mitochondria-associated protein that probably functions as a regulator of cellular redox state and thereby regulates protein post-translational modification, protein folding and mitochondrial activity. Indirectly regulates neuronal proliferation, migration, and organization in the developing brain. The polypeptide is Thioredoxin-related transmembrane protein 2 (TMX2) (Macaca fascicularis (Crab-eating macaque)).